A 416-amino-acid chain; its full sequence is 3-oxoacyl-[acyl-carrier-protein] synthase 1 (416 aa).

A Ketosynthase family 3 (KS3) domain is found at 11–415 (FPSVVVTAVT…GHNVALAFGR (405 aa)). Residues Cys171, His311, and His345 each act as for beta-ketoacyl synthase activity in the active site. Residues His311 and His345 each coordinate substrate.

It belongs to the thiolase-like superfamily. Beta-ketoacyl-ACP synthases family.

Its subcellular location is the cytoplasm. The enzyme catalyses an ultra-long-chain mono-unsaturated fatty acyl-[ACP] + malonyl-[ACP] + H(+) = a 3-oxo-ultra-long-chain mono-unsaturated fatty acyl-[ACP] + holo-[ACP] + CO2. It functions in the pathway lipid metabolism; mycolic acid biosynthesis. Functionally, part of the mycobacterial fatty acid elongation system FAS-II, which is involved in mycolic acid biosynthesis. Catalyzes the elongation of long chain acyl-ACP substrates by the addition of two carbons from malonyl-ACP to an acyl acceptor. Involved in the initial extension of the mycolate chain and forms monounsaturated fatty acids that averaged 40 carbons in length. This is 3-oxoacyl-[acyl-carrier-protein] synthase 1 (kasA) from Mycobacterium tuberculosis (strain ATCC 35801 / TMC 107 / Erdman).